Reading from the N-terminus, the 455-residue chain is 1,4-beta-D-glucan cellobiohydrolase C (455 aa).

Residues 1–19 form the signal peptide; sequence MHYSASGLALAFLLPAIQA. The CBM1 domain occupies 20-55; that stretch reads QQTLYGQCGGSGWTGATSCVAGAACSTLNQWYAQCL. 2 disulfide bridges follow: cysteine 27/cysteine 44 and cysteine 38/cysteine 54. A thr-rich linker region spans residues 59 to 92; sequence TTTSTTLTTTTSSVTTTSNPGSTTTTSSVTVTAT. The interval 66-86 is disordered; sequence TTTTSSVTTTSNPGSTTTTSS. Residues 93-450 form a catalytic region; sequence ASGNPFSGYQ…QAYFVQLLQN (358 aa). The active site involves aspartate 185. Intrachain disulfides connect cysteine 186–cysteine 245 and cysteine 377–cysteine 424. Aspartate 231 acts as the Proton donor in catalysis. The Nucleophile role is filled by aspartate 410.

Belongs to the glycosyl hydrolase 6 (cellulase B) family.

The protein resides in the secreted. It carries out the reaction Hydrolysis of (1-&gt;4)-beta-D-glucosidic linkages in cellulose and cellotetraose, releasing cellobiose from the non-reducing ends of the chains.. Functionally, the biological conversion of cellulose to glucose generally requires three types of hydrolytic enzymes: (1) Endoglucanases which cut internal beta-1,4-glucosidic bonds; (2) Exocellobiohydrolases that cut the disaccharide cellobiose from the non-reducing end of the cellulose polymer chain; (3) Beta-1,4-glucosidases which hydrolyze the cellobiose and other short cello-oligosaccharides to glucose. Active against carboxymethylcellulose, beta-glucan and lichenan. In Emericella nidulans (strain FGSC A4 / ATCC 38163 / CBS 112.46 / NRRL 194 / M139) (Aspergillus nidulans), this protein is 1,4-beta-D-glucan cellobiohydrolase C (cbhC).